The following is a 583-amino-acid chain: Cationic amino acid transporter 6, chloroplastic (583 aa).

Residues 1-50 (MEVQSSSNNGGHSSFSSLRVYLNSLSATPSRLSRRAISVSTSSDEMSRVR) constitute a chloroplast transit peptide. The next 14 helical transmembrane spans lie at 63–83 (WYDL…FVTT), 91–111 (AGPS…LSAF), 132–152 (ITFG…DYVM), 186–206 (GFNE…VIIC), 216–236 (NMIM…MGFI), 255–275 (FFPF…LSYI), 294–314 (IPVG…LMAV), 347–367 (VVGI…MLGQ), 397–417 (ASTF…LNVL), 418–438 (LNLV…ALIF), 450–470 (WPTL…TLIW), 481–501 (FMLG…QCVV), 509–529 (LWGV…NIFL), and 541–561 (FGFF…HASS).

The protein belongs to the amino acid-polyamine-organocation (APC) superfamily. Cationic amino acid transporter (CAT) (TC 2.A.3.3) family. Expressed in roots, stems, flowers, and leaves.

The protein localises to the plastid. It localises to the chloroplast membrane. In terms of biological role, permease involved in the transport of the cationic neutral or acidic amino acids. The sequence is that of Cationic amino acid transporter 6, chloroplastic (CAT6) from Arabidopsis thaliana (Mouse-ear cress).